Reading from the N-terminus, the 197-residue chain is Negative modulator of initiation of replication (197 aa).

Interaction with DNA stretches follow at residues 100-101, 129-133, and 163-169; these read AV, RTRVY, and NTNSGRK.

This sequence belongs to the SeqA family. As to quaternary structure, homodimer. Polymerizes to form helical filaments.

It is found in the cytoplasm. In terms of biological role, negative regulator of replication initiation, which contributes to regulation of DNA replication and ensures that replication initiation occurs exactly once per chromosome per cell cycle. Binds to pairs of hemimethylated GATC sequences in the oriC region, thus preventing assembly of replication proteins and re-initiation at newly replicated origins. Repression is relieved when the region becomes fully methylated. The sequence is that of Negative modulator of initiation of replication from Haemophilus influenzae (strain ATCC 51907 / DSM 11121 / KW20 / Rd).